Here is a 567-residue protein sequence, read N- to C-terminus: Proline--tRNA ligase (567 aa).

The protein belongs to the class-II aminoacyl-tRNA synthetase family. ProS type 1 subfamily. Homodimer.

Its subcellular location is the cytoplasm. It carries out the reaction tRNA(Pro) + L-proline + ATP = L-prolyl-tRNA(Pro) + AMP + diphosphate. In terms of biological role, catalyzes the attachment of proline to tRNA(Pro) in a two-step reaction: proline is first activated by ATP to form Pro-AMP and then transferred to the acceptor end of tRNA(Pro). As ProRS can inadvertently accommodate and process non-cognate amino acids such as alanine and cysteine, to avoid such errors it has two additional distinct editing activities against alanine. One activity is designated as 'pretransfer' editing and involves the tRNA(Pro)-independent hydrolysis of activated Ala-AMP. The other activity is designated 'posttransfer' editing and involves deacylation of mischarged Ala-tRNA(Pro). The misacylated Cys-tRNA(Pro) is not edited by ProRS. The polypeptide is Proline--tRNA ligase (Idiomarina loihiensis (strain ATCC BAA-735 / DSM 15497 / L2-TR)).